We begin with the raw amino-acid sequence, 313 residues long: Porphobilinogen deaminase (313 aa).

The residue at position 242 (cysteine 242) is an S-(dipyrrolylmethanemethyl)cysteine.

The protein belongs to the HMBS family. As to quaternary structure, monomer. Requires dipyrromethane as cofactor.

The enzyme catalyses 4 porphobilinogen + H2O = hydroxymethylbilane + 4 NH4(+). It participates in porphyrin-containing compound metabolism; protoporphyrin-IX biosynthesis; coproporphyrinogen-III from 5-aminolevulinate: step 2/4. Functionally, tetrapolymerization of the monopyrrole PBG into the hydroxymethylbilane pre-uroporphyrinogen in several discrete steps. The chain is Porphobilinogen deaminase from Escherichia coli O17:K52:H18 (strain UMN026 / ExPEC).